The sequence spans 385 residues: S-adenosylmethionine synthase (385 aa).

Residue His-15 coordinates ATP. Asp-17 contributes to the Mg(2+) binding site. Glu-43 contributes to the K(+) binding site. Residues Glu-56 and Gln-99 each contribute to the L-methionine site. Residues 99-109 form a flexible loop region; sequence QSPEIAQGVDE. ATP-binding positions include 164-166, 230-231, Asp-239, 245-246, Ala-262, and Lys-266; these read DAK, RF, and RK. Asp-239 contributes to the L-methionine binding site. L-methionine is bound at residue Lys-270.

Belongs to the AdoMet synthase family. In terms of assembly, homotetramer; dimer of dimers. Requires Mg(2+) as cofactor. K(+) serves as cofactor.

It is found in the cytoplasm. The enzyme catalyses L-methionine + ATP + H2O = S-adenosyl-L-methionine + phosphate + diphosphate. The protein operates within amino-acid biosynthesis; S-adenosyl-L-methionine biosynthesis; S-adenosyl-L-methionine from L-methionine: step 1/1. Its function is as follows. Catalyzes the formation of S-adenosylmethionine (AdoMet) from methionine and ATP. The overall synthetic reaction is composed of two sequential steps, AdoMet formation and the subsequent tripolyphosphate hydrolysis which occurs prior to release of AdoMet from the enzyme. This Hydrogenovibrio crunogenus (strain DSM 25203 / XCL-2) (Thiomicrospira crunogena) protein is S-adenosylmethionine synthase.